An 89-amino-acid chain; its full sequence is Small ribosomal subunit protein uS15 (89 aa).

Residues 1 to 10 are compositionally biased toward basic and acidic residues; sequence MSITAEKKQE. Positions 1-24 are disordered; the sequence is MSITAEKKQEVIQSNARAEGDTGS.

Belongs to the universal ribosomal protein uS15 family. Part of the 30S ribosomal subunit. Forms a bridge to the 50S subunit in the 70S ribosome, contacting the 23S rRNA.

In terms of biological role, one of the primary rRNA binding proteins, it binds directly to 16S rRNA where it helps nucleate assembly of the platform of the 30S subunit by binding and bridging several RNA helices of the 16S rRNA. Functionally, forms an intersubunit bridge (bridge B4) with the 23S rRNA of the 50S subunit in the ribosome. The polypeptide is Small ribosomal subunit protein uS15 (Novosphingobium aromaticivorans (strain ATCC 700278 / DSM 12444 / CCUG 56034 / CIP 105152 / NBRC 16084 / F199)).